The primary structure comprises 141 residues: Nucleoside diphosphate kinase (141 aa).

The ATP site is built by Lys11, Phe59, Arg87, Thr93, Arg104, and Asn114. The Pros-phosphohistidine intermediate role is filled by His117.

It belongs to the NDK family. In terms of assembly, homotetramer. Requires Mg(2+) as cofactor.

Its subcellular location is the cytoplasm. It carries out the reaction a 2'-deoxyribonucleoside 5'-diphosphate + ATP = a 2'-deoxyribonucleoside 5'-triphosphate + ADP. It catalyses the reaction a ribonucleoside 5'-diphosphate + ATP = a ribonucleoside 5'-triphosphate + ADP. In terms of biological role, major role in the synthesis of nucleoside triphosphates other than ATP. The ATP gamma phosphate is transferred to the NDP beta phosphate via a ping-pong mechanism, using a phosphorylated active-site intermediate. This Polynucleobacter necessarius subsp. necessarius (strain STIR1) protein is Nucleoside diphosphate kinase.